The primary structure comprises 421 residues: Enolase (421 aa).

Gln-165 provides a ligand contact to (2R)-2-phosphoglycerate. Residue Glu-207 is the Proton donor of the active site. Mg(2+)-binding residues include Asp-244, Glu-285, and Asp-312. (2R)-2-phosphoglycerate is bound by residues Lys-337, Arg-366, Ser-367, and Lys-388. Catalysis depends on Lys-337, which acts as the Proton acceptor.

This sequence belongs to the enolase family. Mg(2+) serves as cofactor.

The protein resides in the cytoplasm. It is found in the secreted. The protein localises to the cell surface. The catalysed reaction is (2R)-2-phosphoglycerate = phosphoenolpyruvate + H2O. Its pathway is carbohydrate degradation; glycolysis; pyruvate from D-glyceraldehyde 3-phosphate: step 4/5. Catalyzes the reversible conversion of 2-phosphoglycerate (2-PG) into phosphoenolpyruvate (PEP). It is essential for the degradation of carbohydrates via glycolysis. The polypeptide is Enolase (Ehrlichia canis (strain Jake)).